The chain runs to 67 residues: Small ribosomal subunit protein eS31 (67 aa).

Zn(2+) contacts are provided by cysteine 31, cysteine 34, cysteine 49, and cysteine 52. The C4-type zinc finger occupies 31–52 (CPKCGAGVFMAEHLNRFACGKC).

The protein belongs to the eukaryotic ribosomal protein eS31 family. In terms of assembly, part of the 30S ribosomal subunit. Zn(2+) is required as a cofactor.

The protein is Small ribosomal subunit protein eS31 of Methanococcus maripaludis (strain DSM 14266 / JCM 13030 / NBRC 101832 / S2 / LL).